A 265-amino-acid polypeptide reads, in one-letter code: Transcription factor Spi-B-like (265 aa).

Residues 1–31 are TAD1 (Acidic); that stretch reads MLTLEASQLDGPHPSYMFSDSSFYDLDSCKP. The tract at residues 42-63 is TAD2; it reads AEPPTDPCAGWLELAEPGYEPF. The tract at residues 127–160 is disordered; it reads TPLSEDDDFPTDAPALEVSDSDSDENLSPGGSLD. Residues 169–252 constitute a DNA-binding region (ETS); that stretch reads LRLYQFLLGL…VKKKLTYQFG (84 aa).

The protein belongs to the ETS family.

The protein resides in the nucleus. Its function is as follows. May act as a sequence specific transcriptional activator. The protein is Transcription factor Spi-B-like of Paleosuchus palpebrosus (Cuvier's smooth-fronted caiman).